Reading from the N-terminus, the 862-residue chain is Protein translocase subunit SecA (862 aa).

Residues Gln-86, 104 to 108 (GEGKT), and Asp-499 contribute to the ATP site. 4 residues coordinate Zn(2+): Cys-848, Cys-850, Cys-859, and His-860.

Belongs to the SecA family. As to quaternary structure, monomer and homodimer. Part of the essential Sec protein translocation apparatus which comprises SecA, SecYEG and auxiliary proteins SecDF-YajC and YidC. Requires Zn(2+) as cofactor.

Its subcellular location is the cell inner membrane. The protein resides in the cytoplasm. The enzyme catalyses ATP + H2O + cellular proteinSide 1 = ADP + phosphate + cellular proteinSide 2.. Its function is as follows. Part of the Sec protein translocase complex. Interacts with the SecYEG preprotein conducting channel. Has a central role in coupling the hydrolysis of ATP to the transfer of proteins into and across the cell membrane, serving both as a receptor for the preprotein-SecB complex and as an ATP-driven molecular motor driving the stepwise translocation of polypeptide chains across the membrane. The polypeptide is Protein translocase subunit SecA (Ehrlichia canis (strain Jake)).